The primary structure comprises 107 residues: Ig kappa chain V-VI region SAPC 10 (107 aa).

The segment at 1–23 (EIVLTQSPAITAASLGQKVTITC) is framework-1. The cysteines at positions 23 and 87 are disulfide-linked. Residues 24–33 (SASSSVSYMH) are complementarity-determining-1. The segment at 34–48 (WYQQKSGTSPKPWIY) is framework-2. The interval 49-55 (EISKLAS) is complementarity-determining-2. Residues 56–87 (GVPARFSGSGSGTSYSLTISSMEAEDAAIYYC) form a framework-3 region. The segment at 88–96 (QQWNYPLIT) is complementarity-determining-3. Residues 97–106 (FGGGTKLEIK) are framework-4.

The protein is Ig kappa chain V-VI region SAPC 10 of Mus musculus (Mouse).